The primary structure comprises 385 residues: Citrate synthase (385 aa).

Catalysis depends on residues H223, H263, and D318.

This sequence belongs to the citrate synthase family. Homodimer.

The enzyme catalyses oxaloacetate + acetyl-CoA + H2O = citrate + CoA + H(+). It participates in carbohydrate metabolism; tricarboxylic acid cycle; isocitrate from oxaloacetate: step 1/2. Its activity is regulated as follows. Allosterically inhibited by NADH. This chain is Citrate synthase (gltA), found in Thermoplasma acidophilum (strain ATCC 25905 / DSM 1728 / JCM 9062 / NBRC 15155 / AMRC-C165).